Consider the following 230-residue polypeptide: Protein-L-isoaspartate O-methyltransferase (230 aa).

The active site involves Ser68.

This sequence belongs to the methyltransferase superfamily. L-isoaspartyl/D-aspartyl protein methyltransferase family.

The protein localises to the cytoplasm. It catalyses the reaction [protein]-L-isoaspartate + S-adenosyl-L-methionine = [protein]-L-isoaspartate alpha-methyl ester + S-adenosyl-L-homocysteine. Functionally, catalyzes the methyl esterification of L-isoaspartyl residues in peptides and proteins that result from spontaneous decomposition of normal L-aspartyl and L-asparaginyl residues. It plays a role in the repair and/or degradation of damaged proteins. The chain is Protein-L-isoaspartate O-methyltransferase from Salinibacter ruber (strain DSM 13855 / M31).